The chain runs to 107 residues: U1-lycotoxin-Ls1b (107 aa).

An N-terminal signal peptide occupies residues 1–20 (MMKVLVVVALLPTLISYSSS). The propeptide occupies 21-41 (EGIDDLEADELLSLMANEQTR). 4 cysteine pairs are disulfide-bonded: Cys-44/Cys-59, Cys-51/Cys-68, Cys-58/Cys-86, and Cys-70/Cys-84.

It belongs to the neurotoxin 19 (CSTX) family. 04 (U1-Lctx) subfamily. In terms of tissue distribution, expressed by the venom gland.

It is found in the secreted. The chain is U1-lycotoxin-Ls1b from Lycosa singoriensis (Wolf spider).